A 104-amino-acid polypeptide reads, in one-letter code: Small ribosomal subunit protein uS10 (104 aa).

It belongs to the universal ribosomal protein uS10 family. In terms of assembly, part of the 30S ribosomal subunit.

Its function is as follows. Involved in the binding of tRNA to the ribosomes. The polypeptide is Small ribosomal subunit protein uS10 (Nitrosococcus oceani (strain ATCC 19707 / BCRC 17464 / JCM 30415 / NCIMB 11848 / C-107)).